The following is a 357-amino-acid chain: Cinnamyl alcohol dehydrogenase 1 (357 aa).

The 329-residue stretch at 20–348 folds into the Enoyl reductase (ER) domain; sequence GILSPYTYTL…KNDVRYRFVV (329 aa). Cys47 serves as a coordination point for Zn(2+). Ser49 contacts NADP(+). The Zn(2+) site is built by His69, Glu70, Cys100, Cys103, Cys106, Cys114, and Cys163. NADP(+)-binding positions include Thr167, 188 to 193, 211 to 216, Thr251, Gly275, and 298 to 300; these read GLGGVG, SSSDKK, and SFI.

The protein belongs to the zinc-containing alcohol dehydrogenase family. In terms of assembly, homodimer. Zn(2+) is required as a cofactor. As to expression, accumulates mainly in the placenta of red fruits, and, to a lower extent, in green fruits placenta, pericarp and seeds.

It localises to the cytoplasm. It catalyses the reaction (E)-cinnamyl alcohol + NADP(+) = (E)-cinnamaldehyde + NADPH + H(+). The enzyme catalyses (E)-coniferol + NADP(+) = (E)-coniferaldehyde + NADPH + H(+). It carries out the reaction (E)-sinapyl alcohol + NADP(+) = (E)-sinapaldehyde + NADPH + H(+). The catalysed reaction is (E)-4-coumaroyl alcohol + NADP(+) = (E)-4-coumaraldehyde + NADPH + H(+). It catalyses the reaction (E)-caffeyl alcohol + NADP(+) = (E)-caffeyl aldehyde + NADPH + H(+). The enzyme catalyses vanillin + NADPH + H(+) = 4-hydroxy-3-methoxy-benzenemethanol + NADP(+). The protein operates within aromatic compound metabolism; phenylpropanoid biosynthesis. With respect to regulation, inhibited, in a concentration-dependent manner, by N-(O-hydroxyphenyl) sulfinamoyltertiobutyl acetate (OHPAS), a specific cinnamyl alcohol dehydrogenase (CAD) inhibitor, as well as by ethylenediaminetetraacetic acid (EDTA), a metalloenzyme inhibitor. In terms of biological role, involved in the biosynthesis of capsinoids natural products (e.g. capsiate), non-pungent alkaloids synthesized from phenylpropanoid intermediates in the placental tissue of sweet chili pepper fruit acting as repellant on herbivorous mammals. Catalyzes the reduction of vanillin to generate vanillyl alcohol, a precursor of capsiate, a non-pungent component that accumulates mainly in the placenta of mature red fruits, but also in green fruits to lower levels. Involved in lignin biosynthesis. Catalyzes the final step specific for the production of lignin monomers. Mediates the conversion of cinnamaldehyde and coniferaldehyde to cinnamyl alcohol and coniferyl alcohol, respectively. Catalyzes the NADPH-dependent reduction of 5-hydroxyconiferaldehyde, sinapaldehyde, 4-coumaraldehyde and caffeyl aldehyde to their respective alcohols. The polypeptide is Cinnamyl alcohol dehydrogenase 1 (Capsicum annuum (Capsicum pepper)).